Consider the following 140-residue polypeptide: Large ribosomal subunit protein uL11 (140 aa).

It belongs to the universal ribosomal protein uL11 family. Part of the ribosomal stalk of the 50S ribosomal subunit. Interacts with L10 and the large rRNA to form the base of the stalk. L10 forms an elongated spine to which L12 dimers bind in a sequential fashion forming a multimeric L10(L12)X complex. In terms of processing, one or more lysine residues are methylated.

Its function is as follows. Forms part of the ribosomal stalk which helps the ribosome interact with GTP-bound translation factors. The chain is Large ribosomal subunit protein uL11 from Staphylococcus saprophyticus subsp. saprophyticus (strain ATCC 15305 / DSM 20229 / NCIMB 8711 / NCTC 7292 / S-41).